An 82-amino-acid chain; its full sequence is Metallothionein-like protein 2A (82 aa).

This sequence belongs to the metallothionein superfamily. Type 15 family. As to expression, expressed in stems, leaves, rachis, inflorescences and seeds.

In terms of biological role, metallothioneins have a high content of cysteine residues that bind various heavy metals. The polypeptide is Metallothionein-like protein 2A (MT2A) (Oryza sativa subsp. japonica (Rice)).